The primary structure comprises 380 residues: Cytochrome b (380 aa).

A run of 4 helical transmembrane segments spans residues F34–T54, W78–I99, W114–L134, and F179–T199. The heme b site is built by H84 and H98. Residues H183 and H197 each contribute to the heme b site. H202 is a binding site for a ubiquinone. The next 4 helical transmembrane spans lie at P227 to S247, L289 to H309, L321 to S341, and F348 to P368.

This sequence belongs to the cytochrome b family. The cytochrome bc1 complex contains 11 subunits: 3 respiratory subunits (MT-CYB, CYC1 and UQCRFS1), 2 core proteins (UQCRC1 and UQCRC2) and 6 low-molecular weight proteins (UQCRH/QCR6, UQCRB/QCR7, UQCRQ/QCR8, UQCR10/QCR9, UQCR11/QCR10 and a cleavage product of UQCRFS1). This cytochrome bc1 complex then forms a dimer. It depends on heme b as a cofactor.

Its subcellular location is the mitochondrion inner membrane. In terms of biological role, component of the ubiquinol-cytochrome c reductase complex (complex III or cytochrome b-c1 complex) that is part of the mitochondrial respiratory chain. The b-c1 complex mediates electron transfer from ubiquinol to cytochrome c. Contributes to the generation of a proton gradient across the mitochondrial membrane that is then used for ATP synthesis. This is Cytochrome b (MT-CYB) from Todus todus (Jamaican tody).